Consider the following 333-residue polypeptide: Testin-2 (333 aa).

The first 17 residues, 1-17 (MIAVLFLAILCLEIDST), serve as a signal peptide directing secretion. 3 disulfides stabilise this stretch: Cys135–Cys178, Cys169–Cys211, and Cys269–Cys322. N-linked (GlcNAc...) asparagine glycosylation is present at Asn173. Residues His276 and Asn300 contribute to the active site.

It belongs to the peptidase C1 family. Expressed in testis and ovary. Low level in spleen, epididymis, kidney, and uterus. Expressed in primary cultures of Sertoli cells.

The protein resides in the secreted. In Mus musculus (Mouse), this protein is Testin-2.